We begin with the raw amino-acid sequence, 184 residues long: Protein GrpE (184 aa).

The segment covering 1–10 has biased composition (basic and acidic residues); it reads MSQETEKDLE. The tract at residues 1-38 is disordered; the sequence is MSQETEKDLEQTQNEELVEEAQSDEKKDQEVDPVEAAQ.

It belongs to the GrpE family. In terms of assembly, homodimer.

The protein localises to the cytoplasm. In terms of biological role, participates actively in the response to hyperosmotic and heat shock by preventing the aggregation of stress-denatured proteins, in association with DnaK and GrpE. It is the nucleotide exchange factor for DnaK and may function as a thermosensor. Unfolded proteins bind initially to DnaJ; upon interaction with the DnaJ-bound protein, DnaK hydrolyzes its bound ATP, resulting in the formation of a stable complex. GrpE releases ADP from DnaK; ATP binding to DnaK triggers the release of the substrate protein, thus completing the reaction cycle. Several rounds of ATP-dependent interactions between DnaJ, DnaK and GrpE are required for fully efficient folding. This chain is Protein GrpE, found in Sulfurovum sp. (strain NBC37-1).